Reading from the N-terminus, the 144-residue chain is Protein CT_635 (144 aa).

Residues 110–144 are disordered; the sequence is EVTNDIGHSSHKSPTPKKTKSSSQKKSKKKNWIPL. Residues 118–144 show a composition bias toward basic residues; the sequence is SSHKSPTPKKTKSSSQKKSKKKNWIPL.

The protein belongs to the chlamydial CPn_0742/CT_635/TC_0003 family.

In Chlamydia trachomatis serovar D (strain ATCC VR-885 / DSM 19411 / UW-3/Cx), this protein is Protein CT_635.